Reading from the N-terminus, the 317-residue chain is Metaxin-1 (317 aa).

Glycyl lysine isopeptide (Lys-Gly) (interchain with G-Cter in ubiquitin) cross-links involve residues lysine 38, lysine 41, and lysine 78. Residues glutamate 164–arginine 184 traverse the membrane as a helical segment.

The protein belongs to the metaxin family. In terms of assembly, interacts with MTX2/metaxin-2. Associates with the mitochondrial contact site and cristae organizing system (MICOS) complex, composed of at least MICOS10/MIC10, CHCHD3/MIC19, CHCHD6/MIC25, APOOL/MIC27, IMMT/MIC60, APOO/MIC23/MIC26 and QIL1/MIC13. This complex was also known under the names MINOS or MitOS complex. The MICOS complex associates with mitochondrial outer membrane proteins SAMM50, MTX1 and MTX2 (together described as components of the mitochondrial outer membrane sorting assembly machinery (SAM) complex) and DNAJC11, mitochondrial inner membrane protein TMEM11 and with HSPA9. The MICOS and SAM complexes together with DNAJC11 are part of a large protein complex spanning both membranes termed the mitochondrial intermembrane space bridging (MIB) complex. Interacts with ARMC1. In terms of processing, ubiquitinated by PRKN during mitophagy, leading to its degradation and enhancement of mitophagy. Deubiquitinated by USP30.

It is found in the mitochondrion outer membrane. In terms of biological role, involved in transport of proteins into the mitochondrion. Essential for embryonic development. This is Metaxin-1 (MTX1) from Bos taurus (Bovine).